Consider the following 479-residue polypeptide: Bifunctional protein HldE (479 aa).

A ribokinase region spans residues 1–319; sequence MTVILPDFLK…NVVQKYEYTK (319 aa). 195-198 contacts ATP; sequence NMSE. Asp264 is an active-site residue. The tract at residues 346-479 is cytidylyltransferase; sequence MTNGVFDILH…IDTMEINEIN (134 aa).

In the N-terminal section; belongs to the carbohydrate kinase PfkB family. The protein in the C-terminal section; belongs to the cytidylyltransferase family. Homodimer.

It carries out the reaction D-glycero-beta-D-manno-heptose 7-phosphate + ATP = D-glycero-beta-D-manno-heptose 1,7-bisphosphate + ADP + H(+). The enzyme catalyses D-glycero-beta-D-manno-heptose 1-phosphate + ATP + H(+) = ADP-D-glycero-beta-D-manno-heptose + diphosphate. It participates in nucleotide-sugar biosynthesis; ADP-L-glycero-beta-D-manno-heptose biosynthesis; ADP-L-glycero-beta-D-manno-heptose from D-glycero-beta-D-manno-heptose 7-phosphate: step 1/4. Its pathway is nucleotide-sugar biosynthesis; ADP-L-glycero-beta-D-manno-heptose biosynthesis; ADP-L-glycero-beta-D-manno-heptose from D-glycero-beta-D-manno-heptose 7-phosphate: step 3/4. Functionally, catalyzes the phosphorylation of D-glycero-D-manno-heptose 7-phosphate at the C-1 position to selectively form D-glycero-beta-D-manno-heptose-1,7-bisphosphate. In terms of biological role, catalyzes the ADP transfer from ATP to D-glycero-beta-D-manno-heptose 1-phosphate, yielding ADP-D-glycero-beta-D-manno-heptose. In Blochmanniella floridana, this protein is Bifunctional protein HldE.